The sequence spans 482 residues: NADH-quinone oxidoreductase subunit N (482 aa).

13 helical membrane passes run 10-30 (ALGPALPELILTVGALVLILY), 44-64 (VGAIIVLIVALFSVVSQPLGA), 77-97 (GFARVMKTLTLVGSLAALLLA), 113-133 (ILIVLSSIGMLIMASANDLIG), 166-186 (FVLGALSSGMLLYGASLVYGF), 206-226 (LGLVLGIVFVAAGVAFKLAAV), 243-265 (VTAFFASAPKMAAMAMTVRVFIG), 277-296 (IIVFIAIASMALGSFAAIGQ), 302-322 (LMAYSSIGNVGYALIGLAAGT), 328-348 (GVVVYMAIYLAMTLGAFAVIL), 374-394 (AFCLAMMMFSLAGIPPLAGFF), 397-417 (FYVFAAAIKAGLNVLAVIGVV), and 451-471 (IVLAASSVVVVLFWIVPAPLV).

Belongs to the complex I subunit 2 family. NDH-1 is composed of 14 different subunits. Subunits NuoA, H, J, K, L, M, N constitute the membrane sector of the complex.

The protein localises to the cell inner membrane. The catalysed reaction is a quinone + NADH + 5 H(+)(in) = a quinol + NAD(+) + 4 H(+)(out). Its function is as follows. NDH-1 shuttles electrons from NADH, via FMN and iron-sulfur (Fe-S) centers, to quinones in the respiratory chain. The immediate electron acceptor for the enzyme in this species is believed to be ubiquinone. Couples the redox reaction to proton translocation (for every two electrons transferred, four hydrogen ions are translocated across the cytoplasmic membrane), and thus conserves the redox energy in a proton gradient. The sequence is that of NADH-quinone oxidoreductase subunit N from Methylobacterium nodulans (strain LMG 21967 / CNCM I-2342 / ORS 2060).